The following is a 132-amino-acid chain: Small ribosomal subunit protein bS6 (132 aa).

Residues 99 to 132 are disordered; that stretch reads ASPMVKAKDERRGDRREDFANETADDADAGDSEE. The segment covering 104–117 has biased composition (basic and acidic residues); that stretch reads KAKDERRGDRREDF. The span at 121–132 shows a compositional bias: acidic residues; it reads TADDADAGDSEE.

It belongs to the bacterial ribosomal protein bS6 family.

Binds together with bS18 to 16S ribosomal RNA. The chain is Small ribosomal subunit protein bS6 from Serratia proteamaculans (strain 568).